Here is a 151-residue protein sequence, read N- to C-terminus: Endoribonuclease YbeY (151 aa).

Residues His-114, His-118, and His-124 each contribute to the Zn(2+) site.

The protein belongs to the endoribonuclease YbeY family. Zn(2+) serves as cofactor.

Its subcellular location is the cytoplasm. Functionally, single strand-specific metallo-endoribonuclease involved in late-stage 70S ribosome quality control and in maturation of the 3' terminus of the 16S rRNA. The polypeptide is Endoribonuclease YbeY (Hamiltonella defensa subsp. Acyrthosiphon pisum (strain 5AT)).